We begin with the raw amino-acid sequence, 305 residues long: UDP-3-O-acyl-N-acetylglucosamine deacetylase (305 aa).

Residues histidine 79, histidine 238, and aspartate 242 each contribute to the Zn(2+) site. Histidine 265 serves as the catalytic Proton donor.

Belongs to the LpxC family. Requires Zn(2+) as cofactor.

The enzyme catalyses a UDP-3-O-[(3R)-3-hydroxyacyl]-N-acetyl-alpha-D-glucosamine + H2O = a UDP-3-O-[(3R)-3-hydroxyacyl]-alpha-D-glucosamine + acetate. It functions in the pathway glycolipid biosynthesis; lipid IV(A) biosynthesis; lipid IV(A) from (3R)-3-hydroxytetradecanoyl-[acyl-carrier-protein] and UDP-N-acetyl-alpha-D-glucosamine: step 2/6. Its function is as follows. Catalyzes the hydrolysis of UDP-3-O-myristoyl-N-acetylglucosamine to form UDP-3-O-myristoylglucosamine and acetate, the committed step in lipid A biosynthesis. This chain is UDP-3-O-acyl-N-acetylglucosamine deacetylase, found in Citrobacter koseri (strain ATCC BAA-895 / CDC 4225-83 / SGSC4696).